Here is a 109-residue protein sequence, read N- to C-terminus: Archaeosine synthase (109 aa).

Cys21 serves as the catalytic Thioimide intermediate. Residue Asp28 is the Proton donor/acceptor of the active site. Substrate contacts are provided by residues Asp28, 43–46, and 62–63; these read LAIE and HE.

The protein belongs to the archaeosine synthase type 2 family. Forms a symmetric tunnel-fold (T-fold) homodecamer of two head-to-head facing pentameric subunits, with 10 active sites at the intermonomer interfaces.

It catalyses the reaction 7-cyano-7-carbaguanosine(15) in tRNA + NH4(+) = archaeosine(15) in tRNA. It functions in the pathway tRNA modification; archaeosine-tRNA biosynthesis. Functionally, is responsible for the final step in the biosynthesis of archaeosine, a modified nucleoside present in the dihydrouridine loop (D-loop) of archaeal tRNA. Catalyzes the conversion of 7-cyano-7-deazaguanine (preQ0)-modified tRNA to archaeosine-tRNA, transforming a nitrile group to a formamidine group. Can use neither glutamine nor asparagine as amino donor in vitro, is only able to utilize free ammonium. However, the enzyme might function in vivo with a partner that serves to generate ammonium. The polypeptide is Archaeosine synthase (Pyrobaculum calidifontis (strain DSM 21063 / JCM 11548 / VA1)).